The following is a 345-amino-acid chain: MKVAVLPGDGIGPEVTEAALKVLRALDEAEGLGLAYEVFPFGGAAIDAFGEPFPEPTRKGVEEAEAVLLGSVGGPKWDGLPRKIRPETGLLSLRKSQDLFANLRPAKVFPGLERLSPLKEEIARGVDVLIVRELTGGIYFGEPRGMSEAEAWNTERYSKPEVERVARVAFEAARKRRKHVVSVDKANVLEVGEFWRKTVEEVGRGYPDVALEHQYVDAMAMHLVRSPARFDVVVTGNIFGDILSDLASVLPGSLGLLPSASLGRGTPVFEPVHGSAPDIAGKGIANPTAAILSAAMMLEHAFGLVELARKVEDAVAKALLETPPPDLGGSAGTEAFTATVLRHLA.

74–87 (GPKWDGLPRKIRPE) contributes to the NAD(+) binding site. Residues Arg-94, Arg-104, Arg-132, and Asp-217 each coordinate substrate. Positions 217, 241, and 245 each coordinate Mg(2+). 274–286 (GSAPDIAGKGIAN) is an NAD(+) binding site.

Belongs to the isocitrate and isopropylmalate dehydrogenases family. LeuB type 1 subfamily. In terms of assembly, homodimer. It depends on Mg(2+) as a cofactor. Mn(2+) is required as a cofactor.

The protein localises to the cytoplasm. The enzyme catalyses (2R,3S)-3-isopropylmalate + NAD(+) = 4-methyl-2-oxopentanoate + CO2 + NADH. It participates in amino-acid biosynthesis; L-leucine biosynthesis; L-leucine from 3-methyl-2-oxobutanoate: step 3/4. Functionally, catalyzes the oxidation of 3-carboxy-2-hydroxy-4-methylpentanoate (3-isopropylmalate) to 3-carboxy-4-methyl-2-oxopentanoate. The product decarboxylates to 4-methyl-2 oxopentanoate. The polypeptide is 3-isopropylmalate dehydrogenase (leuB) (Thermus thermophilus (strain ATCC 27634 / DSM 579 / HB8)).